Consider the following 864-residue polypeptide: DNA mismatch repair protein MutS (864 aa).

621–628 contributes to the ATP binding site; sequence GPNMGGKS. Residues 804–833 form a disordered region; sequence ETGKPESPAPVASRSSKPSMQADMFAEPQP.

Belongs to the DNA mismatch repair MutS family.

Its function is as follows. This protein is involved in the repair of mismatches in DNA. It is possible that it carries out the mismatch recognition step. This protein has a weak ATPase activity. This is DNA mismatch repair protein MutS from Teredinibacter turnerae (strain ATCC 39867 / T7901).